A 238-amino-acid chain; its full sequence is Purine nucleoside phosphorylase DeoD-type (238 aa).

His-5 provides a ligand contact to a purine D-ribonucleoside. Residues Gly-21, Arg-25, Arg-44, and Arg-88–Ser-91 each bind phosphate. Residues Glu-180–Glu-182 and Ser-204–Asp-205 each bind a purine D-ribonucleoside. Catalysis depends on Asp-205, which acts as the Proton donor.

This sequence belongs to the PNP/UDP phosphorylase family. Homohexamer; trimer of homodimers.

The enzyme catalyses a purine D-ribonucleoside + phosphate = a purine nucleobase + alpha-D-ribose 1-phosphate. It catalyses the reaction a purine 2'-deoxy-D-ribonucleoside + phosphate = a purine nucleobase + 2-deoxy-alpha-D-ribose 1-phosphate. Functionally, catalyzes the reversible phosphorolytic breakdown of the N-glycosidic bond in the beta-(deoxy)ribonucleoside molecules, with the formation of the corresponding free purine bases and pentose-1-phosphate. This chain is Purine nucleoside phosphorylase DeoD-type, found in Xenorhabdus nematophila (strain ATCC 19061 / DSM 3370 / CCUG 14189 / LMG 1036 / NCIMB 9965 / AN6).